The chain runs to 224 residues: UPF0758 protein PBPRA0202 (224 aa).

The 123-residue stretch at 102–224 (VLTSPQHTRH…IVSFSEQGWL (123 aa)) folds into the MPN domain. Residues histidine 173, histidine 175, and aspartate 186 each coordinate Zn(2+). Residues 173–186 (HNHPSGVAEPSQSD) carry the JAMM motif motif.

Belongs to the UPF0758 family.

This chain is UPF0758 protein PBPRA0202, found in Photobacterium profundum (strain SS9).